A 307-amino-acid chain; its full sequence is E3 ubiquitin-protein ligase PHF7 (307 aa).

The C2HC pre-PHD-type zinc finger occupies 30–68 (SPVCLLCLQEPGDPEKLGEFLQKDNLCVHYFCLILSSRL). Residues cysteine 33, cysteine 36, histidine 58, and cysteine 61 each contribute to the Zn(2+) site. Positions 67–92 (RLPQKGQPNRGLHGFMPEDIKREAVR) are required for interaction and ubiquitination of the nucleosome core particle. The PHD-type zinc finger occupies 96–145 (KICFVCKKKGAAIRCQNDQCVQNFHLPCGQERGCLSQFFGEYKSYCRKHR). Cysteine 98, cysteine 101, cysteine 110, cysteine 115, histidine 120, cysteine 123, cysteine 141, histidine 144, cysteine 160, cysteine 163, cysteine 179, cysteine 180, histidine 186, cysteine 189, cysteine 204, cysteine 207, cysteine 248, cysteine 253, cysteine 273, cysteine 276, histidine 282, cysteine 285, cysteine 297, and cysteine 300 together coordinate Zn(2+). The interval 150–307 (IHQGSLGEES…NECLPASTTS (158 aa)) is required for interaction with ubiquitinated UBE2D2. The RING-type; degenerate zinc-finger motif lies at 160–208 (CVLCCENLSRTSVENIQSPCCSQAIYHRKCIQKYAHTSAKHFFKCPQCN). The tract at residues 244–301 (RYRHCDAPICLYEQGRDSFEDEGRWRLILCATCGSHGTHRDCSSLRPNSKKWECNECL) is required for association with and ubiquitination of H3.

In terms of assembly, interacts with MEF2C; the interaction promotes MEF2C binding to its transcription targets. Interacts with GATA4; the interaction promotes GATA4 binding to its transcription targets. Interacts with UBE2D2; the interaction inhibits cleavage of PHF7 and promotes association of the complex with the nucleosome core particle. Expressed in Leydig cells and in developing spermatids (at protein level). Highly expressed in Sertoli cells in testis.

It localises to the nucleus. The enzyme catalyses S-ubiquitinyl-[E2 ubiquitin-conjugating enzyme]-L-cysteine + [acceptor protein]-L-lysine = [E2 ubiquitin-conjugating enzyme]-L-cysteine + N(6)-ubiquitinyl-[acceptor protein]-L-lysine.. It participates in protein modification; protein ubiquitination. In terms of biological role, E3 ubiquitin-protein ligase which ubiquitinates histone H3 at 'Lys-14'. Required for male fertility, via inhibition of SPOP-mediated BRDT degradation when in the presence of acetylated histone H4 in early condensing spermatids. Stabilization of BRDT allows it to facilitate histone removal in early condensing spermatids and promote the progression of histone-to-protamine exchange. Promotes the expression of steroidogenesis proteins in the testes, and as a result plays a role in maintaining testosterone levels and repressing osteoclastogenesis. Promotes transcription of cardiac enhancer genes by facilitating binding of cardiac transcription factors such as MEF2C and GATA4 to target gene promoters. Ubiquitinates histone H4. Ubiquitinates histone H2A and H3 as part of the nucleosome core particle. In Mus musculus (Mouse), this protein is E3 ubiquitin-protein ligase PHF7.